Consider the following 291-residue polypeptide: Putative fatty acid elongase 4 (291 aa).

3 consecutive transmembrane segments (helical) span residues 46–66, 79–99, and 254–274; these read ILFQ…FILI, FTLK…SIIA, and NLYL…QFFV.

It belongs to the ELO family.

Its subcellular location is the membrane. It catalyses the reaction a very-long-chain acyl-CoA + malonyl-CoA + H(+) = a very-long-chain 3-oxoacyl-CoA + CO2 + CoA. Its pathway is lipid metabolism; fatty acid biosynthesis. Could be implicated in synthesis of very long chain fatty acids. This chain is Putative fatty acid elongase 4 (elo-4), found in Caenorhabditis elegans.